A 102-amino-acid polypeptide reads, in one-letter code: Large ribosomal subunit protein bL21 (102 aa).

The protein belongs to the bacterial ribosomal protein bL21 family. As to quaternary structure, part of the 50S ribosomal subunit. Contacts protein L20.

In terms of biological role, this protein binds to 23S rRNA in the presence of protein L20. The sequence is that of Large ribosomal subunit protein bL21 from Geobacillus thermodenitrificans (strain NG80-2).